We begin with the raw amino-acid sequence, 91 residues long: Cell division protein CrgA (91 aa).

Polar residues predominate over residues 1–24 (MPKSKITTEGSALPQSSSSATNRT). A disordered region spans residues 1–28 (MPKSKITTEGSALPQSSSSATNRTPVKI). The next 2 membrane-spanning stretches (helical) occupy residues 38–58 (IAIM…NYLA) and 68–88 (LGPW…LMTM).

Belongs to the CrgA family.

Its subcellular location is the cell membrane. Functionally, involved in cell division. This is Cell division protein CrgA from Corynebacterium aurimucosum (strain ATCC 700975 / DSM 44827 / CIP 107346 / CN-1) (Corynebacterium nigricans).